The following is a 733-amino-acid chain: 1,4-alpha-glucan branching enzyme GlgB (733 aa).

The active-site Nucleophile is Asp409. The Proton donor role is filled by Glu462.

Belongs to the glycosyl hydrolase 13 family. GlgB subfamily. Monomer.

The enzyme catalyses Transfers a segment of a (1-&gt;4)-alpha-D-glucan chain to a primary hydroxy group in a similar glucan chain.. It participates in glycan biosynthesis; glycogen biosynthesis. Catalyzes the formation of the alpha-1,6-glucosidic linkages in glycogen by scission of a 1,4-alpha-linked oligosaccharide from growing alpha-1,4-glucan chains and the subsequent attachment of the oligosaccharide to the alpha-1,6 position. The chain is 1,4-alpha-glucan branching enzyme GlgB from Gloeobacter violaceus (strain ATCC 29082 / PCC 7421).